Consider the following 200-residue polypeptide: Endoribonuclease YbeY (200 aa).

Residues histidine 120, histidine 124, and histidine 130 each contribute to the Zn(2+) site.

This sequence belongs to the endoribonuclease YbeY family. The cofactor is Zn(2+).

It is found in the cytoplasm. In terms of biological role, single strand-specific metallo-endoribonuclease involved in late-stage 70S ribosome quality control and in maturation of the 3' terminus of the 16S rRNA. This Corynebacterium efficiens (strain DSM 44549 / YS-314 / AJ 12310 / JCM 11189 / NBRC 100395) protein is Endoribonuclease YbeY.